A 1096-amino-acid polypeptide reads, in one-letter code: DNA-directed RNA polymerase subunit beta (1096 aa).

Residues 1070-1096 (LMQDVNPRRSTPSRPTYESLGSDYQED) are disordered.

This sequence belongs to the RNA polymerase beta chain family. In terms of assembly, in cyanobacteria the RNAP catalytic core is composed of 2 alpha, 1 beta, 1 beta', 1 gamma and 1 omega subunit. When a sigma factor is associated with the core the holoenzyme is formed, which can initiate transcription.

It catalyses the reaction RNA(n) + a ribonucleoside 5'-triphosphate = RNA(n+1) + diphosphate. Functionally, DNA-dependent RNA polymerase catalyzes the transcription of DNA into RNA using the four ribonucleoside triphosphates as substrates. In Prochlorococcus marinus (strain MIT 9211), this protein is DNA-directed RNA polymerase subunit beta.